The chain runs to 257 residues: Ribonuclease PH (257 aa).

Residues Arg86 and Gly124–Arg126 each bind phosphate.

This sequence belongs to the RNase PH family. Homohexameric ring arranged as a trimer of dimers.

It catalyses the reaction tRNA(n+1) + phosphate = tRNA(n) + a ribonucleoside 5'-diphosphate. Functionally, phosphorolytic 3'-5' exoribonuclease that plays an important role in tRNA 3'-end maturation. Removes nucleotide residues following the 3'-CCA terminus of tRNAs; can also add nucleotides to the ends of RNA molecules by using nucleoside diphosphates as substrates, but this may not be physiologically important. Probably plays a role in initiation of 16S rRNA degradation (leading to ribosome degradation) during starvation. This is Ribonuclease PH from Halalkalibacterium halodurans (strain ATCC BAA-125 / DSM 18197 / FERM 7344 / JCM 9153 / C-125) (Bacillus halodurans).